The following is a 256-amino-acid chain: Cysteine-rich repeat secretory protein 42 (256 aa).

Positions 1–26 (MSSVFGSVHILAMIAIQLLLTHSVSS) are cleaved as a signal peptide. 2 Gnk2-homologous domains span residues 33–136 (YLHH…SVAS) and 142–253 (YEND…LYPF).

It belongs to the cysteine-rich repeat secretory protein family.

The protein resides in the secreted. The polypeptide is Cysteine-rich repeat secretory protein 42 (CRRSP42) (Arabidopsis thaliana (Mouse-ear cress)).